Consider the following 297-residue polypeptide: B-lymphocyte antigen CD20 (297 aa).

The Cytoplasmic portion of the chain corresponds to 1 to 56 (MTTPRNSVNGTFPAEPMKGPIAMQSGPKPLFRRMSSLVGPTQSFFMRESKTLGAVQ). Ser36 carries the phosphoserine modification. A helical transmembrane segment spans residues 57-78 (IMNGLFHIALGGLLMIPAGIYA). Residues 74–80 (AGIYAPI) form an epitope 1 region. Residues 79–84 (PICVTV) are Extracellular-facing. Residues 85 to 105 (WYPLWGGIMYIISGSLLAATE) traverse the membrane as a helical segment. Residues 106–120 (KNSRKCLVKGKMIMN) lie on the Cytoplasmic side of the membrane. The S-palmitoyl cysteine moiety is linked to residue Cys111. Residues 121–141 (SLSLFAAISGMILSIMDILNI) traverse the membrane as a helical segment. The Extracellular portion of the chain corresponds to 142 to 188 (KISHFLKMESLNFIRAHTPYINIYNCEPANPSEKNSPSTQYCYSIQS). The tract at residues 146–160 (FLKMESLNFIRAHTP) is epitope 2. An intrachain disulfide couples Cys167 to Cys183. Residues 168 to 175 (EPANPSEK) are epitope 3 (recognized by antibodies, including Rituximab). A helical membrane pass occupies residues 189–209 (LFLGILSVMLIFAFFQELVIA). The Cytoplasmic segment spans residues 210–297 (GIVENEWKRT…SSPIENDSSP (88 aa)). The S-palmitoyl cysteine moiety is linked to residue Cys220. Ser225 bears the Phosphoserine mark. Thr239 carries the post-translational modification Phosphothreonine. A disordered region spans residues 247-297 (VGLTETSSQPKNEEDIEIIPIQEEEEEETETNFPEPPQDQESSPIENDSSP). Acidic residues predominate over residues 260–276 (EDIEIIPIQEEEEEETE). The segment covering 285-297 (DQESSPIENDSSP) has biased composition (polar residues).

Belongs to the MS4A family. In terms of assembly, forms homotetramers. Interacts with the heavy and light chains of cell surface IgM, the antigen-binding components of the BCR. Phosphorylated on serines and threonines in resting B-cells. Protein kinase C/PKC can use CD20 as substrate. Expressed on B-cells.

The protein resides in the cell membrane. Functionally, B-lymphocyte-specific membrane protein that plays a role in the regulation of cellular calcium influx necessary for the development, differentiation, and activation of B-lymphocytes. Functions as a store-operated calcium (SOC) channel component promoting calcium influx after activation by the B-cell receptor/BCR. The protein is B-lymphocyte antigen CD20 (MS4A1) of Homo sapiens (Human).